We begin with the raw amino-acid sequence, 207 residues long: Large ribosomal subunit protein uL3c (207 aa).

A disordered region spans residues isoleucine 115 to threonine 151.

It belongs to the universal ribosomal protein uL3 family. In terms of assembly, part of the 50S ribosomal subunit.

Its subcellular location is the plastid. The protein localises to the chloroplast. Functionally, one of the primary rRNA binding proteins, it binds directly near the 3'-end of the 23S rRNA, where it nucleates assembly of the 50S subunit. The sequence is that of Large ribosomal subunit protein uL3c (rpl3) from Emiliania huxleyi (Coccolithophore).